The primary structure comprises 264 residues: 3-methyl-2-oxobutanoate hydroxymethyltransferase (264 aa).

The Mg(2+) site is built by Asp45 and Asp84. Residues 45 to 46, Asp84, and Lys112 each bind 3-methyl-2-oxobutanoate; that span reads DS. Glu114 contacts Mg(2+). Residue Glu181 is the Proton acceptor of the active site.

It belongs to the PanB family. Homodecamer; pentamer of dimers. Mg(2+) is required as a cofactor.

The protein resides in the cytoplasm. It carries out the reaction 3-methyl-2-oxobutanoate + (6R)-5,10-methylene-5,6,7,8-tetrahydrofolate + H2O = 2-dehydropantoate + (6S)-5,6,7,8-tetrahydrofolate. The protein operates within cofactor biosynthesis; (R)-pantothenate biosynthesis; (R)-pantoate from 3-methyl-2-oxobutanoate: step 1/2. Its function is as follows. Catalyzes the reversible reaction in which hydroxymethyl group from 5,10-methylenetetrahydrofolate is transferred onto alpha-ketoisovalerate to form ketopantoate. This is 3-methyl-2-oxobutanoate hydroxymethyltransferase from Escherichia coli O8 (strain IAI1).